Consider the following 417-residue polypeptide: MYPRSCDTFVALPPSTEGQRIIFGKNSDRPCDEVQEVVYFPAKEHEPGKVECTYIEIEQVEKTFAVVLSRPAWLWGAEMGANEHQVCIGNEAVWGRESADGDEALLGMDLVRLALERADTAEKAVDVITDLLEKYGQGGNCMEDECGFTYHNSFLISDRKEAWVLETAGKHWAAERVEAGYRNISNQYSITTKIDKEHPGMRTYAKEQGWWDGESEFSFTDVYSYSSTARIQAAGGRYCEGQKLLQKSNGHISAQTMMDILRDKESGINMEGMFMSTGSMVSVIPKADHLPGVHFFTATPDPERSVFKPFVFVSDVPPLKHTSSPCFGEEDPVKKKPRFQSKPNRKHPLFLKHEVAAAIIDSSGERGQKIEKEMRDLEKQKLEEMEKYLTEGVEDSSLLVHLFTDTVEEEFSVYSSA.

Residues 1 to 5 (MYPRS) constitute a propeptide that is removed on maturation. The active site involves C6. C6 bears the Glyoxylic acid (Cys); alternate mark. C6 carries the post-translational modification Pyruvic acid (Cys); alternate.

Belongs to the peptidase C69 family. Secernin subfamily.

Plays a role in thermal nociception. This chain is Secernin-3 (scrn3), found in Danio rerio (Zebrafish).